Reading from the N-terminus, the 194-residue chain is Small ribosomal subunit protein uS7 (194 aa).

Belongs to the universal ribosomal protein uS7 family. Part of the 30S ribosomal subunit.

Functionally, one of the primary rRNA binding proteins, it binds directly to 16S rRNA where it nucleates assembly of the head domain of the 30S subunit. Is located at the subunit interface close to the decoding center. The sequence is that of Small ribosomal subunit protein uS7 from Methanococcus vannielii (strain ATCC 35089 / DSM 1224 / JCM 13029 / OCM 148 / SB).